Here is a 526-residue protein sequence, read N- to C-terminus: Probable feruloyl esterase B-2 (526 aa).

The first 18 residues, 1-18 (MTKLSLLPLLALASAVLA), serve as a signal peptide directing secretion. 2 disulfide bridges follow: C27–C74 and C62–C113. N-linked (GlcNAc...) asparagine glycosylation is found at N52, N97, and N137. 4 cysteine pairs are disulfide-bonded: C186/C441, C255/C272, C281/C291, and C503/C525. Catalysis depends on S187, which acts as the Acyl-ester intermediate. Residue N233 is glycosylated (N-linked (GlcNAc...) asparagine). The Ca(2+) site is built by D256, D259, A261, D263, and I265. A glycan (N-linked (GlcNAc...) asparagine) is linked at N311. Residues D400 and H440 each act as charge relay system in the active site. N-linked (GlcNAc...) asparagine glycosylation occurs at N516.

This sequence belongs to the tannase family.

The protein localises to the secreted. The catalysed reaction is feruloyl-polysaccharide + H2O = ferulate + polysaccharide.. Its function is as follows. Involved in degradation of plant cell walls. Hydrolyzes the feruloyl-arabinose ester bond in arabinoxylans as well as the feruloyl-galactose and feruloyl-arabinose ester bonds in pectin. This chain is Probable feruloyl esterase B-2 (faeB-2), found in Neosartorya fischeri (strain ATCC 1020 / DSM 3700 / CBS 544.65 / FGSC A1164 / JCM 1740 / NRRL 181 / WB 181) (Aspergillus fischerianus).